A 193-amino-acid chain; its full sequence is Putative nucleotidase YqfW (193 aa).

This sequence belongs to the 5'(3')-deoxyribonucleotidase family.

This Bacillus subtilis (strain 168) protein is Putative nucleotidase YqfW (yqfW).